The primary structure comprises 346 residues: 3-keto-steroid reductase ERG27 (346 aa).

Positions 19, 42, and 48 each coordinate NADP(+). Catalysis depends on proton donor residues S182 and Y205. Positions 205, 209, and 241 each coordinate NADP(+). K209 acts as the Lowers pKa of active site Tyr in catalysis. A helical membrane pass occupies residues 242–262 (FSFFQYLNVFTYYGMLFLFYL). N-linked (GlcNAc...) asparagine glycosylation occurs at N272.

The protein belongs to the short-chain dehydrogenases/reductases (SDR) family. ERG27 subfamily. As to quaternary structure, heterotetramer of ERG25, ERG26, ERG27 and ERG28. ERG28 acts as a scaffold to tether ERG27 and other 4,4-demethylation-related enzymes, forming a demethylation enzyme complex, in the endoplasmic reticulum. Interacts with ERG25 and ERG28. Also interacts with ERG7, but only in lipid particles.

It is found in the endoplasmic reticulum membrane. The protein localises to the lipid droplet. The enzyme catalyses 3-dehydro-4alpha-methylzymosterol + NADPH + H(+) = 4alpha-methylzymosterol + NADP(+). The protein operates within steroid biosynthesis; zymosterol biosynthesis; zymosterol from lanosterol: step 5/6. Its function is as follows. 3-keto-steroid reductase; part of the third module of ergosterol biosynthesis pathway that includes the late steps of the pathway. ERG27 is a catalytic component of the C-4 demethylation complex that catalyzes the reduction of the keto group on the C-3. The third module or late pathway involves the ergosterol synthesis itself through consecutive reactions that mainly occur in the endoplasmic reticulum (ER) membrane. Firstly, the squalene synthase ERG9 catalyzes the condensation of 2 farnesyl pyrophosphate moieties to form squalene, which is the precursor of all steroids. Squalene synthase is crucial for balancing the incorporation of farnesyl diphosphate (FPP) into sterol and nonsterol isoprene synthesis. Secondly, the squalene epoxidase ERG1 catalyzes the stereospecific oxidation of squalene to (S)-2,3-epoxysqualene, which is considered to be a rate-limiting enzyme in steroid biosynthesis. Then, the lanosterol synthase ERG7 catalyzes the cyclization of (S)-2,3 oxidosqualene to lanosterol, a reaction that forms the sterol core. In the next steps, lanosterol is transformed to zymosterol through a complex process involving various demethylation, reduction and desaturation reactions. The lanosterol 14-alpha-demethylase ERG11 (also known as CYP51) catalyzes C14-demethylation of lanosterol to produce 4,4'-dimethyl cholesta-8,14,24-triene-3-beta-ol, which is critical for ergosterol biosynthesis. The C-14 reductase ERG24 reduces the C14=C15 double bond of 4,4-dimethyl-cholesta-8,14,24-trienol to produce 4,4-dimethyl-cholesta-8,24-dienol. 4,4-dimethyl-cholesta-8,24-dienol is substrate of the C-4 demethylation complex ERG25-ERG26-ERG27 in which ERG25 catalyzes the three-step monooxygenation required for the demethylation of 4,4-dimethyl and 4alpha-methylsterols, ERG26 catalyzes the oxidative decarboxylation that results in a reduction of the 3-beta-hydroxy group at the C-3 carbon to an oxo group, and ERG27 is responsible for the reduction of the keto group on the C-3. ERG28 has a role as a scaffold to help anchor ERG25, ERG26 and ERG27 to the endoplasmic reticulum and ERG29 regulates the activity of the iron-containing C4-methylsterol oxidase ERG25. Then, the sterol 24-C-methyltransferase ERG6 catalyzes the methyl transfer from S-adenosyl-methionine to the C-24 of zymosterol to form fecosterol. The C-8 sterol isomerase ERG2 catalyzes the reaction which results in unsaturation at C-7 in the B ring of sterols and thus converts fecosterol to episterol. The sterol-C5-desaturase ERG3 then catalyzes the introduction of a C-5 double bond in the B ring to produce 5-dehydroepisterol. The C-22 sterol desaturase ERG5 further converts 5-dehydroepisterol into ergosta-5,7,22,24(28)-tetraen-3beta-ol by forming the C-22(23) double bond in the sterol side chain. Finally, ergosta-5,7,22,24(28)-tetraen-3beta-ol is substrate of the C-24(28) sterol reductase ERG4 to produce ergosterol. Functionally, facilitates the association of ERG7 with lipid particles preventing its digestion in the endoplasmic reticulum and the lipid particles. This Candida albicans (strain SC5314 / ATCC MYA-2876) (Yeast) protein is 3-keto-steroid reductase ERG27.